We begin with the raw amino-acid sequence, 286 residues long: Tyrosine recombinase XerA (286 aa).

In terms of domain architecture, Core-binding (CB) spans 5–82; the sequence is TLRSEVLEEF…ALKAYFKFEG (78 aa). Residues 98–274 enclose the Tyr recombinase domain; the sequence is TLPKSLTEEE…TAKHLKEAVE (177 aa). Residues Arg-135, Lys-160, His-226, Arg-229, and His-252 contribute to the active site. Tyr-261 acts as the O-(3'-phospho-DNA)-tyrosine intermediate in catalysis.

This sequence belongs to the 'phage' integrase family. XerA subfamily.

The protein localises to the cytoplasm. Its function is as follows. Site-specific tyrosine recombinase, which acts by catalyzing the cutting and rejoining of the recombining DNA molecules. The chain is Tyrosine recombinase XerA from Pyrococcus furiosus (strain ATCC 43587 / DSM 3638 / JCM 8422 / Vc1).